The primary structure comprises 218 residues: N-(5'-phosphoribosyl)anthranilate isomerase (218 aa).

This sequence belongs to the TrpF family.

The enzyme catalyses N-(5-phospho-beta-D-ribosyl)anthranilate = 1-(2-carboxyphenylamino)-1-deoxy-D-ribulose 5-phosphate. It participates in amino-acid biosynthesis; L-tryptophan biosynthesis; L-tryptophan from chorismate: step 3/5. The polypeptide is N-(5'-phosphoribosyl)anthranilate isomerase (Bordetella pertussis (strain Tohama I / ATCC BAA-589 / NCTC 13251)).